A 110-amino-acid chain; its full sequence is UPF0060 membrane protein Bcen_0802 (110 aa).

Helical transmembrane passes span Ala-9–Leu-29, Pro-34–Leu-54, Tyr-66–Leu-86, and Arg-88–Pro-108.

This sequence belongs to the UPF0060 family.

The protein localises to the cell inner membrane. The polypeptide is UPF0060 membrane protein Bcen_0802 (Burkholderia orbicola (strain AU 1054)).